The chain runs to 73 residues: Crustacean hyperglycemic hormone (73 aa).

Disulfide bonds link cysteine 7–cysteine 43, cysteine 23–cysteine 39, and cysteine 26–cysteine 52. Serine 73 is modified (serine amide).

In terms of tissue distribution, produced by the medulla terminalis X-organ in the eyestalks and transported to the sinus gland where they are stored and released. Found also in the brain; in the neuroendocrine structures of the protocerebrum.

It localises to the secreted. Functionally, hormone found in the sinus gland of isopods and decapods which controls the blood sugar level. Has a secretagogue action over the amylase released from the midgut gland. May act as a stress hormone and may be involved in the control of molting and reproduction. In Armadillidium vulgare (Pillbug), this protein is Crustacean hyperglycemic hormone.